A 376-amino-acid chain; its full sequence is Palmitoyl-[acyl-carrier-protein] 4-desaturase 2, chloroplastic (376 aa).

The N-terminal 33 residues, 1–33 (MELHLALRASPLPAADPGRRPPPPRGNFATNCT), are a transit peptide targeting the chloroplast. 6 residues coordinate Fe cation: Glu-114, Glu-149, His-152, Glu-202, Glu-235, and His-238.

The protein belongs to the fatty acid desaturase type 2 family. Homodimer. Requires Fe(2+) as cofactor. As to expression, preferentially expressed in the flower labellum.

The protein resides in the plastid. The protein localises to the chloroplast stroma. The catalysed reaction is hexadecanoyl-[ACP] + 2 reduced [2Fe-2S]-[ferredoxin] + O2 + 2 H(+) = (4Z)-hexadecenoyl-[ACP] + 2 oxidized [2Fe-2S]-[ferredoxin] + 2 H2O. It catalyses the reaction octadecanoyl-[ACP] + 2 reduced [2Fe-2S]-[ferredoxin] + O2 + 2 H(+) = (9Z)-octadecenoyl-[ACP] + 2 oxidized [2Fe-2S]-[ferredoxin] + 2 H2O. The protein operates within lipid metabolism; fatty acid metabolism. In terms of biological role, converts stearoyl-ACP to oleoyl-ACP by introduction of a cis double bond between carbons 9 and 10 of the acyl chain. Converts palmitoyl-ACP to (4Z)-hexadec-4-enoyl-ACP by introduction of a cis double bond between carbons 4 and 5 of the acyl chain. Catalyzes the desaturation of saturated fatty acid 18:0 and 16:0 to generate 18:1 (delta-9) and 16:1 (delta-4) intermediates, expected to give rise to 9-alkenes and 12-alkenes, respectively. This Ophrys arachnitiformis subsp. archipelagi (Orchid) protein is Palmitoyl-[acyl-carrier-protein] 4-desaturase 2, chloroplastic (SAD2).